A 126-amino-acid chain; its full sequence is Large ribosomal subunit protein bL12 (126 aa).

Belongs to the bacterial ribosomal protein bL12 family. In terms of assembly, homodimer. Part of the ribosomal stalk of the 50S ribosomal subunit. Forms a multimeric L10(L12)X complex, where L10 forms an elongated spine to which 2 to 4 L12 dimers bind in a sequential fashion. Binds GTP-bound translation factors.

Its function is as follows. Forms part of the ribosomal stalk which helps the ribosome interact with GTP-bound translation factors. Is thus essential for accurate translation. The protein is Large ribosomal subunit protein bL12 of Prosthecochloris aestuarii (strain DSM 271 / SK 413).